The sequence spans 156 residues: Putative NrdI-like protein (156 aa).

This sequence belongs to the NrdI family.

This is Putative NrdI-like protein from Streptococcus pneumoniae serotype 4 (strain ATCC BAA-334 / TIGR4).